Reading from the N-terminus, the 255-residue chain is Reaction center protein L chain (255 aa).

3 helical membrane passes run glycine 12 to leucine 35, glycine 64 to glycine 92, and leucine 95 to glycine 120. Residues histidine 133 and histidine 153 each coordinate (7R,8Z)-bacteriochlorophyll b. A helical transmembrane segment spans residues asparagine 150–asparagine 179. Histidine 170 contributes to the Fe cation binding site. Residue phenylalanine 196 coordinates a ubiquinone. Residues glycine 205–serine 231 traverse the membrane as a helical segment. Histidine 210 contacts Fe cation.

It belongs to the reaction center PufL/M/PsbA/D family. In terms of assembly, reaction center is composed of four bacteriochlorophylls, two bacteriopheophytins, two ubiquinones, one iron, and three highly hydrophobic polypeptide chains (designated L, M, and H).

Its subcellular location is the cellular chromatophore membrane. Functionally, the reaction center is a membrane-bound complex that mediates the initial photochemical event in the electron transfer process of photosynthesis. The sequence is that of Reaction center protein L chain (pufL) from Pararhodospirillum photometricum (Rhodospirillum photometricum).